The sequence spans 63 residues: Beta-defensin 6 (63 aa).

The N-terminal stretch at 1–22 (MKIHYLLFAFILVMLSPLAAFS) is a signal peptide. Glutamine 23 bears the Pyrrolidone carboxylic acid mark. Intrachain disulfides connect cysteine 31-cysteine 59, cysteine 38-cysteine 52, and cysteine 42-cysteine 60.

It belongs to the beta-defensin family. Predominantly expressed in skeletal muscle, also expressed in esophagus, tongue, and trachea. Also expressed in lung when induced by lipopolysaccharide.

Its subcellular location is the secreted. Has potent antibacterial activity against E.coli (ATCC 25922). This is Beta-defensin 6 (Defb6) from Mus musculus (Mouse).